Consider the following 444-residue polypeptide: Methionine aminopeptidase 2-1 (444 aa).

The segment at 1–92 (MAAQVTEKLQ…VPVSNLFPNN (92 aa)) is disordered. Residues 15–29 (NGQNGDAKANSTAVG) show a composition bias toward polar residues. Acidic residues predominate over residues 34-45 (GEAEDDSDDEKE). The segment covering 59 to 73 (AKKKKRKSKKKKKGG) has biased composition (basic residues). Histidine 197 contacts substrate. 3 residues coordinate a divalent metal cation: aspartate 217, aspartate 228, and histidine 297. A substrate-binding site is contributed by histidine 305. The a divalent metal cation site is built by glutamate 330 and glutamate 425.

Belongs to the peptidase M24A family. Methionine aminopeptidase eukaryotic type 2 subfamily. Co(2+) serves as cofactor. Zn(2+) is required as a cofactor. The cofactor is Mn(2+). It depends on Fe(2+) as a cofactor.

It localises to the cytoplasm. The catalysed reaction is Release of N-terminal amino acids, preferentially methionine, from peptides and arylamides.. In terms of biological role, cotranslationally removes the N-terminal methionine from nascent proteins. The N-terminal methionine is often cleaved when the second residue in the primary sequence is small and uncharged (Met-Ala-, Cys, Gly, Pro, Ser, Thr, or Val). This is Methionine aminopeptidase 2-1 from Neosartorya fischeri (strain ATCC 1020 / DSM 3700 / CBS 544.65 / FGSC A1164 / JCM 1740 / NRRL 181 / WB 181) (Aspergillus fischerianus).